A 138-amino-acid polypeptide reads, in one-letter code: Ribosome-binding factor A (138 aa).

The span at 1-20 shows a compositional bias: low complexity; sequence MSSRPPSSSGPAGIPKGAPS. Positions 1–21 are disordered; the sequence is MSSRPPSSSGPAGIPKGAPSQ.

It belongs to the RbfA family. As to quaternary structure, monomer. Binds 30S ribosomal subunits, but not 50S ribosomal subunits or 70S ribosomes.

The protein localises to the cytoplasm. In terms of biological role, one of several proteins that assist in the late maturation steps of the functional core of the 30S ribosomal subunit. Associates with free 30S ribosomal subunits (but not with 30S subunits that are part of 70S ribosomes or polysomes). Required for efficient processing of 16S rRNA. May interact with the 5'-terminal helix region of 16S rRNA. The protein is Ribosome-binding factor A of Granulibacter bethesdensis (strain ATCC BAA-1260 / CGDNIH1).